The primary structure comprises 131 residues: Ribonuclease VapC30 (131 aa).

Residues 1–129 (MVIDTSALVA…FQHTDIATVA (129 aa)) enclose the PINc domain. Mg(2+) contacts are provided by Asp4 and Asp99.

This sequence belongs to the PINc/VapC protein family. Mg(2+) serves as cofactor.

Functionally, toxic component of a type II toxin-antitoxin (TA) system. An RNase. Its toxic effect is neutralized by coexpression with cognate antitoxin VapB30. In Mycobacterium tuberculosis (strain CDC 1551 / Oshkosh), this protein is Ribonuclease VapC30.